The primary structure comprises 101 residues: Ubiquitin-like protein SMT3 (101 aa).

Ser2 carries the post-translational modification N-acetylserine. Phosphoserine is present on residues Ser2 and Ser4. The region spanning Thr22–Gly98 is the Ubiquitin-like domain. Gly98 participates in a covalent cross-link: Glycyl lysine isopeptide (Gly-Lys) (interchain with K-? in acceptor proteins). A propeptide spanning residues Ala99–Tyr101 is cleaved from the precursor.

This sequence belongs to the ubiquitin family. SUMO subfamily. In terms of assembly, activated by a E1 ligase composed of AOS1 and UBA2.

Not known; suppressor of MIF2 mutations. In Saccharomyces cerevisiae (strain ATCC 204508 / S288c) (Baker's yeast), this protein is Ubiquitin-like protein SMT3 (SMT3).